Reading from the N-terminus, the 172-residue chain is Ribosome maturation factor RimM (172 aa).

A PRC barrel domain is found at 97-170 (DDEYYYDEII…LITIDVLEGL (74 aa)).

It belongs to the RimM family. As to quaternary structure, binds ribosomal protein uS19.

It localises to the cytoplasm. In terms of biological role, an accessory protein needed during the final step in the assembly of 30S ribosomal subunit, possibly for assembly of the head region. Essential for efficient processing of 16S rRNA. May be needed both before and after RbfA during the maturation of 16S rRNA. It has affinity for free ribosomal 30S subunits but not for 70S ribosomes. This chain is Ribosome maturation factor RimM, found in Leuconostoc citreum (strain KM20).